We begin with the raw amino-acid sequence, 325 residues long: Olfactory receptor 10AC1 (325 aa).

Over M1–P26 the chain is Extracellular. N6 is a glycosylation site (N-linked (GlcNAc...) asparagine). The chain crosses the membrane as a helical span at residues V27–L47. Over V48–Q57 the chain is Cytoplasmic. A helical membrane pass occupies residues P58–V78. The Extracellular segment spans residues P79 to C101. The chain crosses the membrane as a helical span at residues A102 to M122. Over A123–R147 the chain is Cytoplasmic. The chain crosses the membrane as a helical span at residues L148–F168. Residues H169–P171 lie on the Extracellular side of the membrane. The chain crosses the membrane as a helical span at residues F172 to A192. Residues C193 to E200 lie on the Cytoplasmic side of the membrane. Residues L201–S221 traverse the membrane as a helical segment. The Extracellular segment spans residues Y222 to S243. A helical membrane pass occupies residues T244–V264. Over R265–L325 the chain is Cytoplasmic.

The protein belongs to the G-protein coupled receptor 1 family.

It is found in the cell membrane. In terms of biological role, odorant receptor. This is Olfactory receptor 10AC1 (OR10AC1) from Homo sapiens (Human).